A 141-amino-acid polypeptide reads, in one-letter code: MALTIHCNIVSAEQEIFSGLVELLVAAATEGDVGIGYGHAPFLSALKPGPVRVKKQSGDEEIFYVSGGYLEVQPESINVLADTALRADDMDEASAEAAKKEAEEALASQTGDGIDYSKAAARLAEAAAQLRTLQAIRKRAR.

This sequence belongs to the ATPase epsilon chain family. F-type ATPases have 2 components, CF(1) - the catalytic core - and CF(0) - the membrane proton channel. CF(1) has five subunits: alpha(3), beta(3), gamma(1), delta(1), epsilon(1). CF(0) has three main subunits: a, b and c.

It is found in the cell inner membrane. Its function is as follows. Produces ATP from ADP in the presence of a proton gradient across the membrane. This is ATP synthase epsilon chain from Teredinibacter turnerae (strain ATCC 39867 / T7901).